The sequence spans 338 residues: MNLQRFPRYPLTFGPTPIQPLARLSKHLGGKVHLYAKREDCNSGLAFGGNKTRKLEYLIPEVLAQGCDTLVSIGGIQSNQTRQVAAVAAHLGMKCVLVQENWVNYSDAVYDRVGNIQMSRILGADVRLVPDGFDIGFRKSWEEALESVRAAGGKPYAIPAGCSDHPLGGLGFVGFAEEVRQQEAELGFKFDYVVVCSVTGSTQAGMVVGFAADGRADRVIGIDASAKPAQTREQITRIARQTAEKVGLGRDITSEDVVLDERFAGPEYGLPNDGTLEAIRLCARMEGVLTDPVYEGKSMHGMIEMVRNGEFPEGSRVLYAHLGGVPALNGYSFIFRNG.

Lys-51 is subject to N6-(pyridoxal phosphate)lysine. Residue Ser-78 is the Nucleophile of the active site.

It belongs to the ACC deaminase/D-cysteine desulfhydrase family. In terms of assembly, homotrimer. It depends on pyridoxal 5'-phosphate as a cofactor.

The catalysed reaction is 1-aminocyclopropane-1-carboxylate + H2O = 2-oxobutanoate + NH4(+). Functionally, catalyzes a cyclopropane ring-opening reaction, the irreversible conversion of 1-aminocyclopropane-1-carboxylate (ACC) to ammonia and alpha-ketobutyrate. Allows growth on ACC as a nitrogen source. The chain is 1-aminocyclopropane-1-carboxylate deaminase from Paraburkholderia xenovorans (strain LB400).